The chain runs to 228 residues: MNSIEFPLFDRTTKNSVISTTSNDLSNWSRLSSLWPLLYGTSCCFIEFASLIGSRFDFDRYGLVPRSSPRQADLILTAGTITMKMAPSLVRLYEQMPKPKYVIAMGACTITGGMFSTDSYSTVRGVDKLIPVDVYLPGCPPKPEAVIDAITKLRKKVSREIYEDRISSQQENRCFTINHKFRIRRSTHTGNYDQGLLDQSPSTSTSRIRPSENFFKYKSTVFSHELVN.

[4Fe-4S] cluster is bound by residues Cys43, Cys44, Cys108, and Cys139.

This sequence belongs to the complex I 20 kDa subunit family. In terms of assembly, NDH is composed of at least 16 different subunits, 5 of which are encoded in the nucleus. Requires [4Fe-4S] cluster as cofactor.

Its subcellular location is the plastid. It is found in the chloroplast thylakoid membrane. It catalyses the reaction a plastoquinone + NADH + (n+1) H(+)(in) = a plastoquinol + NAD(+) + n H(+)(out). It carries out the reaction a plastoquinone + NADPH + (n+1) H(+)(in) = a plastoquinol + NADP(+) + n H(+)(out). Its function is as follows. NDH shuttles electrons from NAD(P)H:plastoquinone, via FMN and iron-sulfur (Fe-S) centers, to quinones in the photosynthetic chain and possibly in a chloroplast respiratory chain. The immediate electron acceptor for the enzyme in this species is believed to be plastoquinone. Couples the redox reaction to proton translocation, and thus conserves the redox energy in a proton gradient. The chain is NAD(P)H-quinone oxidoreductase subunit K, chloroplastic from Ceratophyllum demersum (Rigid hornwort).